A 397-amino-acid chain; its full sequence is uncharacterized protein (397 aa).

Residues Ser115 and Ser141 each carry the phosphoserine modification. The tract at residues Asn135–Lys156 is disordered. Residue Lys239 forms a Glycyl lysine isopeptide (Lys-Gly) (interchain with G-Cter in SUMO2) linkage. A phosphoserine mark is found at Ser269 and Ser296. The tract at residues Gly289–Ser316 is disordered. Low complexity predominate over residues Ala300–Ser316. A Phosphoserine modification is found at Ser342. Residues Ser354–Cys397 form a disordered region. Over residues Ala356–Pro367 the composition is skewed to polar residues. Basic residues predominate over residues Pro385–Cys397.

This is an uncharacterized protein from Rattus norvegicus (Rat).